We begin with the raw amino-acid sequence, 103 residues long: BLOC-1-related complex subunit 7 (103 aa).

This sequence belongs to the BORCS7 family.

The protein localises to the lysosome membrane. In terms of biological role, as part of a BORC-like complex may play a role in lysosomes movement and localization at the cell periphery. Associated with the cytosolic face of lysosomes, this complex may couple lysosomes to microtubule plus-end-directed kinesin motor. The protein is BLOC-1-related complex subunit 7 of Danio rerio (Zebrafish).